Reading from the N-terminus, the 328-residue chain is Ribosomal RNA large subunit methyltransferase F (328 aa).

Residues 1–31 are disordered; sequence MTDTRKPPRKKPQRPAKPAAPREKATLHPRN.

Belongs to the methyltransferase superfamily. METTL16/RlmF family.

It is found in the cytoplasm. It catalyses the reaction adenosine(1618) in 23S rRNA + S-adenosyl-L-methionine = N(6)-methyladenosine(1618) in 23S rRNA + S-adenosyl-L-homocysteine + H(+). In terms of biological role, specifically methylates the adenine in position 1618 of 23S rRNA. This is Ribosomal RNA large subunit methyltransferase F from Pseudomonas syringae pv. syringae (strain B728a).